The primary structure comprises 114 residues: MANKDQQDNDKYVTLTDEKGNESLYEILFTFHSDEYKKDYILFTPAGSDRITVEDPDQEVEIQAFSFDPTSGDSETDSDLYPIENDDEWNMVSEVLNTFVEDDSLRTDDKNDED.

It belongs to the UPF0473 family.

This is UPF0473 protein OEOE_1164 from Oenococcus oeni (strain ATCC BAA-331 / PSU-1).